Consider the following 285-residue polypeptide: Bifunctional protein FolD (285 aa).

NADP(+) contacts are provided by residues 165 to 167 (GRS) and Ser-190.

This sequence belongs to the tetrahydrofolate dehydrogenase/cyclohydrolase family. In terms of assembly, homodimer.

It carries out the reaction (6R)-5,10-methylene-5,6,7,8-tetrahydrofolate + NADP(+) = (6R)-5,10-methenyltetrahydrofolate + NADPH. The catalysed reaction is (6R)-5,10-methenyltetrahydrofolate + H2O = (6R)-10-formyltetrahydrofolate + H(+). The protein operates within one-carbon metabolism; tetrahydrofolate interconversion. Catalyzes the oxidation of 5,10-methylenetetrahydrofolate to 5,10-methenyltetrahydrofolate and then the hydrolysis of 5,10-methenyltetrahydrofolate to 10-formyltetrahydrofolate. The polypeptide is Bifunctional protein FolD (Burkholderia multivorans (strain ATCC 17616 / 249)).